A 394-amino-acid polypeptide reads, in one-letter code: Serine palmitoyltransferase (394 aa).

Pyridoxal 5'-phosphate-binding positions include 111–112 (GF), serine 183, histidine 211, and threonine 239. At lysine 242 the chain carries N6-(pyridoxal phosphate)lysine.

The protein belongs to the class-II pyridoxal-phosphate-dependent aminotransferase family. It depends on pyridoxal 5'-phosphate as a cofactor.

It catalyses the reaction L-serine + hexadecanoyl-CoA + H(+) = 3-oxosphinganine + CO2 + CoA. It participates in lipid metabolism; sphingolipid metabolism. Involved in de novo bacterial ceramide synthesis. Catalyzes the condensation of L-serine with palmitoyl-CoA (hexadecanoyl-CoA) to produce 3-oxosphinganine. Also capable of using alanine as substrate leading to the formation of 1-deoxysphinganine (1-deoxySa). Contributes to the levels of endogenous sphingolipids in its host. The chain is Serine palmitoyltransferase from Bacteroides ovatus (strain ATCC 8483 / DSM 1896 / JCM 5824 / BCRC 10623 / CCUG 4943 / NCTC 11153).